Consider the following 129-residue polypeptide: Replication initiation control protein YabA (129 aa).

The segment at 52–71 is disordered; the sequence is LSLTDEATPEPKAETEAEHG. Residues 60 to 71 are compositionally biased toward basic and acidic residues; that stretch reads PEPKAETEAEHG. 4 residues coordinate Zn(2+): H103, C105, C119, and C122.

The protein belongs to the YabA family. Homotetramer. Interacts with both DnaA and DnaN, acting as a bridge between these two proteins. Zn(2+) is required as a cofactor.

The protein localises to the cytoplasm. The protein resides in the nucleoid. Involved in control of chromosome replication initiation. Inhibits the cooperative binding of DnaA to the oriC region, thus negatively regulating initiation of chromosome replication. Inhibits the ability of DnaA-ATP to form a helix on DNA; does not disassemble preformed DnaA-DNA helices. Decreases the residence time of DnaA on the chromosome at its binding sites (oriC, replication forks and promoter-binding sites). Tethers DnaA to the replication machinery via the DNA polymerase beta sliding clamp subunit (dnaN). Associates with oriC and other DnaA targets on the chromosome in a DnaA-dependent manner. The chain is Replication initiation control protein YabA from Listeria monocytogenes serotype 4a (strain HCC23).